The sequence spans 37 residues: Calcitonin gene-related peptide 1 (37 aa).

Cysteines 2 and 7 form a disulfide. At Phe37 the chain carries Phenylalanine amide.

It belongs to the calcitonin family.

The protein resides in the secreted. Its function is as follows. CGRP1/CALCA is a peptide hormone that induces vasodilation mediated by the CALCRL-RAMP1 receptor complex. Dilates a variety of vessels including the coronary, cerebral and systemic vasculature. Its abundance in the CNS also points toward a neurotransmitter or neuromodulator role. It also elevates platelet cAMP. CGRP1 can also bind and activate CALCR-RAMP1 (AMYR1) receptor complex. The chain is Calcitonin gene-related peptide 1 (CALCA) from Ovis aries (Sheep).